The following is a 495-amino-acid chain: UDP-N-acetylmuramate--L-alanine ligase (495 aa).

Residue 122-128 (GTHGKTT) participates in ATP binding.

It belongs to the MurCDEF family.

It is found in the cytoplasm. The catalysed reaction is UDP-N-acetyl-alpha-D-muramate + L-alanine + ATP = UDP-N-acetyl-alpha-D-muramoyl-L-alanine + ADP + phosphate + H(+). Its pathway is cell wall biogenesis; peptidoglycan biosynthesis. Its function is as follows. Cell wall formation. The chain is UDP-N-acetylmuramate--L-alanine ligase from Mycobacterium leprae (strain TN).